A 304-amino-acid chain; its full sequence is Ribosomal protein L11 methyltransferase (304 aa).

4 residues coordinate S-adenosyl-L-methionine: Thr-147, Gly-168, Asp-190, and Asn-238.

This sequence belongs to the methyltransferase superfamily. PrmA family.

Its subcellular location is the cytoplasm. The catalysed reaction is L-lysyl-[protein] + 3 S-adenosyl-L-methionine = N(6),N(6),N(6)-trimethyl-L-lysyl-[protein] + 3 S-adenosyl-L-homocysteine + 3 H(+). In terms of biological role, methylates ribosomal protein L11. The polypeptide is Ribosomal protein L11 methyltransferase (Prochlorococcus marinus (strain SARG / CCMP1375 / SS120)).